The sequence spans 371 residues: MLMNFVNNVSKTINGGARIVYVGSFSWAVLSLLFVTAFSGWNNIFSMLPHEIFILVLTISLPIALIVLIFMLSQIVRTVESVKSEISTLSQRDPVSEEAVTMLADLFREHRDAVAAQVAAQVEATAQLVQINQDNRALAAPSPDSGDENPLALLAQMFREYRETVTAQLEAQISATTQLVEASRDSRDGIVDELRSQRVLSQEITQELSHIAQSRNVVPVAEPGLDPSQRIDRMRALAEVLGLALNDLSMTATQLLSEHLNAAHGDREGTQKFISTLTNAYFAGDKNVFFRSLVSEVVNHSDQLQQCAIGAENVRQQISKILREAREIRSLVSACDPNDLVRIVFEDGELWALEKALAEHFLIDGTPISDA.

Topologically, residues 1–18 (MLMNFVNNVSKTINGGAR) are cytoplasmic. Residues 19–39 (IVYVGSFSWAVLSLLFVTAFS) form a helical membrane-spanning segment. Topologically, residues 40 to 51 (GWNNIFSMLPHE) are lumenal. The chain crosses the membrane as a helical span at residues 52–72 (IFILVLTISLPIALIVLIFML). Over 73 to 371 (SQIVRTVESV…LIDGTPISDA (299 aa)) the chain is Cytoplasmic.

It belongs to the magnetosome MamY family. Probably interacts with MamX and MamZ proteins.

It is found in the magnetosome membrane. Functionally, may be involved in constriction of the cell inner membrane to form mature magnetosomes. Binds cardiolipin and liposomes. May function with MamX, MamZ amd Mms6 in biomineralization. The polypeptide is Liposome tubulation protein MamY (Magnetospirillum gryphiswaldense (strain DSM 6361 / JCM 21280 / NBRC 15271 / MSR-1)).